The chain runs to 157 residues: Eukaryotic translation initiation factor 5A-2 (157 aa).

Serine 2 is subject to N-acetylserine. A Phosphoserine modification is found at serine 2. A Phosphothreonine modification is found at threonine 7. At lysine 51 the chain carries Hypusine. Serine 74 is subject to Phosphoserine. Lysine 86 is covalently cross-linked (Glycyl lysine isopeptide (Lys-Gly) (interchain with G-Cter in ubiquitin)).

This sequence belongs to the eIF-5A family. Homodimer. Binds to 80S ribosomes. Actively translating ribosomes show mutually exclusive binding of eIF5a (HYP2 or ANB1) and EFT1/eEF2. Interacts with DYS1 and LIA1. Lys-51 undergoes hypusination, a unique post-translational modification that consists in the addition of a butylamino group from spermidine to lysine side chain, leading to the formation of the unusual amino acid hypusine. eIF-5As are the only known proteins to undergo this modification, which is essential for their function.

It localises to the cytoplasm. In terms of biological role, translation factor that promotes translation elongation and termination, particularly upon ribosome stalling at specific amino acid sequence contexts. Binds between the exit (E) and peptidyl (P) site of the ribosome and promotes rescue of stalled ribosome: specifically required for efficient translation of polyproline-containing peptides as well as other motifs that stall the ribosome. Acts as ribosome quality control (RQC) cofactor by joining the RQC complex to facilitate peptidyl transfer during CAT tailing step. Involved in actin dynamics and cell cycle progression, mRNA decay and probably in a pathway involved in stress response and maintenance of cell wall integrity. This Saccharomyces cerevisiae (strain ATCC 204508 / S288c) (Baker's yeast) protein is Eukaryotic translation initiation factor 5A-2 (ANB1).